A 212-amino-acid polypeptide reads, in one-letter code: Transcriptional regulator GfcR (212 aa).

It belongs to the purine/pyrimidine phosphoribosyltransferase family. GfcR subfamily.

DNA-binding transcriptional regulator that functions as a regulator of central sugar catabolic pathways. This chain is Transcriptional regulator GfcR, found in Halobacterium salinarum (strain ATCC 29341 / DSM 671 / R1).